The chain runs to 420 residues: L-glutamine:2-deoxy-scyllo-inosose aminotransferase (420 aa).

At lysine 201 the chain carries N6-(pyridoxal phosphate)lysine.

This sequence belongs to the DegT/DnrJ/EryC1 family. L-glutamine:2-deoxy-scyllo-inosose/scyllo-inosose aminotransferase subfamily. Pyridoxal 5'-phosphate serves as cofactor.

The catalysed reaction is 2-deoxy-L-scyllo-inosose + L-glutamine = 2-deoxy-scyllo-inosamine + 2-oxoglutaramate. It carries out the reaction 3-amino-2,3-dideoxy-scyllo-inosose + L-glutamine = 2-deoxystreptamine + 2-oxoglutaramate. Its pathway is metabolic intermediate biosynthesis; 2-deoxystreptamine biosynthesis; 2-deoxystreptamine from D-glucose 6-phosphate: step 2/4. It participates in antibiotic biosynthesis; gentamicin biosynthesis. In terms of biological role, catalyzes the PLP-dependent transamination of 2-deoxy-scyllo-inosose (2-DOI) to form 2-deoxy-scyllo-inosamine (2-DOIA) using L-glutamine as the amino donor. Also catalyzes the transamination of 3-amino-2,3-dideoxy-scyllo-inosose (keto-2-DOIA) into 2-deoxystreptamine (2-DOS). The chain is L-glutamine:2-deoxy-scyllo-inosose aminotransferase (gntA) from Micromonospora echinospora (Micromonospora purpurea).